We begin with the raw amino-acid sequence, 134 residues long: uncharacterized protein (134 aa).

One can recognise an HTH tetR-type domain in the interval 10–70 (KETRQRIIDA…AVLASRQHPL (61 aa)). Residues 33–52 (TLDQIARKAGVTRGAVYWHF) constitute a DNA-binding region (H-T-H motif).

Functionally, unknown, does not seem to be involved in regulation of the ttgGHI or ttgVW operons. This is an uncharacterized protein from Pseudomonas putida (strain DOT-T1E).